We begin with the raw amino-acid sequence, 391 residues long: uncharacterized protein (391 aa).

This is an uncharacterized protein from Rickettsia prowazekii (strain Madrid E).